The chain runs to 659 residues: Protein kinase byr2 (659 aa).

The region spanning 4 to 67 (YTSKEVAEWL…LKQRDYLREF (64 aa)) is the SAM domain. A compositionally biased stretch (low complexity) spans 180–190 (PKLSSVLPTST). Disordered stretches follow at residues 180–209 (PKLS…YQRP) and 354–387 (SFSP…EEDT). Residues 354–365 (SFSPGSSPSFIE) show a composition bias toward polar residues. Positions 367-380 (PSPISPTSTTSEDT) are enriched in low complexity. One can recognise a Protein kinase domain in the interval 394-658 (WIRGALIGSG…ASELLSHPFV (265 aa)). ATP-binding positions include 400–408 (IGSGSFGQV) and K423. The active-site Proton acceptor is the D522.

Belongs to the protein kinase superfamily. STE Ser/Thr protein kinase family. MAP kinase kinase kinase subfamily. Interacts with rad24 and rad25; these prevent its translocation to the cell membrane during nitrogen starvation.

The protein localises to the cytoplasm. It localises to the cell membrane. The catalysed reaction is L-seryl-[protein] + ATP = O-phospho-L-seryl-[protein] + ADP + H(+). It carries out the reaction L-threonyl-[protein] + ATP = O-phospho-L-threonyl-[protein] + ADP + H(+). Serine/threonine protein kinase involved in conjugation and sporulation. It is thought that it phosphorylates the byr1 protein kinase which itself phosphorylate the spk1 kinase. The protein is Protein kinase byr2 of Schizosaccharomyces pombe (strain 972 / ATCC 24843) (Fission yeast).